Reading from the N-terminus, the 293-residue chain is Neugrin (293 aa).

Positions Met-1–Ala-15 are cleaved as a signal peptide. Disordered regions lie at residues Gln-25–Arg-48 and Pro-162–Lys-211. A Phosphoserine modification is found at Ser-41. An N-linked (GlcNAc...) asparagine glycan is attached at Asn-270.

It belongs to the neugrin family. In terms of assembly, forms a regulatory protein-RNA complex, consisting of RCC1L, NGRN, RPUSD3, RPUSD4, TRUB2, FASTKD2 and 16S mt-rRNA. Interacts with 16S mt-rRNA; this interaction is direct.

It localises to the nucleus. Its subcellular location is the secreted. It is found in the mitochondrion membrane. Plays an essential role in mitochondrial ribosome biogenesis. As a component of a functional protein-RNA module, consisting of RCC1L, NGRN, RPUSD3, RPUSD4, TRUB2, FASTKD2 and 16S mitochondrial ribosomal RNA (16S mt-rRNA), controls 16S mt-rRNA abundance and is required for intra-mitochondrial translation of core subunits of the oxidative phosphorylation system. This is Neugrin (Ngrn) from Rattus norvegicus (Rat).